Consider the following 536-residue polypeptide: Ribulokinase (536 aa).

This sequence belongs to the ribulokinase family.

The catalysed reaction is D-ribulose + ATP = D-ribulose 5-phosphate + ADP + H(+). The enzyme catalyses L-ribulose + ATP = L-ribulose 5-phosphate + ADP + H(+). It functions in the pathway carbohydrate degradation; L-arabinose degradation via L-ribulose; D-xylulose 5-phosphate from L-arabinose (bacterial route): step 2/3. This is Ribulokinase from Staphylococcus epidermidis (strain ATCC 12228 / FDA PCI 1200).